A 95-amino-acid chain; its full sequence is Co-chaperonin GroES (95 aa).

This sequence belongs to the GroES chaperonin family. As to quaternary structure, heptamer of 7 subunits arranged in a ring. Interacts with the chaperonin GroEL.

It localises to the cytoplasm. Functionally, together with the chaperonin GroEL, plays an essential role in assisting protein folding. The GroEL-GroES system forms a nano-cage that allows encapsulation of the non-native substrate proteins and provides a physical environment optimized to promote and accelerate protein folding. GroES binds to the apical surface of the GroEL ring, thereby capping the opening of the GroEL channel. The chain is Co-chaperonin GroES from Rickettsia conorii (strain ATCC VR-613 / Malish 7).